We begin with the raw amino-acid sequence, 422 residues long: 5'-deoxyadenosine deaminase (422 aa).

Zn(2+) contacts are provided by His-57 and His-59. Positions 86 and 178 each coordinate substrate. His-205 contacts Zn(2+). Residues Glu-208 and Asp-294 each contribute to the substrate site. Asp-294 serves as a coordination point for Zn(2+).

The protein belongs to the metallo-dependent hydrolases superfamily. MTA/SAH deaminase family. Homotetramer. Requires Zn(2+) as cofactor.

The enzyme catalyses 5'-deoxyadenosine + H2O + H(+) = 5'-deoxyinosine + NH4(+). The catalysed reaction is S-adenosyl-L-homocysteine + H2O + H(+) = S-inosyl-L-homocysteine + NH4(+). It carries out the reaction S-methyl-5'-thioadenosine + H2O + H(+) = S-methyl-5'-thioinosine + NH4(+). It catalyses the reaction adenosine + H2O + H(+) = inosine + NH4(+). It participates in amino-acid biosynthesis; S-adenosyl-L-methionine biosynthesis. Its function is as follows. Catalyzes the deamination of three SAM-derived enzymatic products, namely 5'-deoxyadenosine, S-adenosyl-L-homocysteine, and 5'-methylthioadenosine, to produce the inosine analogs. Can also deaminate adenosine. The preferred substrate for this enzyme is 5'-deoxyadenosine, but all these substrates are efficiently deaminated. Likely functions in a S-adenosyl-L-methionine (SAM) recycling pathway from S-adenosyl-L-homocysteine (SAH) produced from SAM-dependent methylation reactions. May also be involved in the recycling of 5'-deoxyadenosine, whereupon the 5'-deoxyribose moiety of 5'-deoxyinosine is further metabolized to deoxyhexoses used for the biosynthesis of aromatic amino acids in methanogens. This is 5'-deoxyadenosine deaminase from Methanococcus maripaludis (strain C7 / ATCC BAA-1331).